The primary structure comprises 525 residues: GMP synthase [glutamine-hydrolyzing] (525 aa).

The Glutamine amidotransferase type-1 domain occupies 9–207 (RILILDFGSQ…VQDICGCEAL (199 aa)). Cys86 acts as the Nucleophile in catalysis. Catalysis depends on residues His181 and Glu183. A GMPS ATP-PPase domain is found at 208–400 (WTPSNIVEDA…LGLPYDMVYR (193 aa)). Residue 235-241 (SGGVDSS) coordinates ATP.

Homodimer.

It catalyses the reaction XMP + L-glutamine + ATP + H2O = GMP + L-glutamate + AMP + diphosphate + 2 H(+). It participates in purine metabolism; GMP biosynthesis; GMP from XMP (L-Gln route): step 1/1. Catalyzes the synthesis of GMP from XMP. This chain is GMP synthase [glutamine-hydrolyzing], found in Pseudomonas putida (strain W619).